Consider the following 80-residue polypeptide: Exodeoxyribonuclease 7 small subunit (80 aa).

Belongs to the XseB family. In terms of assembly, heterooligomer composed of large and small subunits.

It localises to the cytoplasm. It carries out the reaction Exonucleolytic cleavage in either 5'- to 3'- or 3'- to 5'-direction to yield nucleoside 5'-phosphates.. Its function is as follows. Bidirectionally degrades single-stranded DNA into large acid-insoluble oligonucleotides, which are then degraded further into small acid-soluble oligonucleotides. In Caulobacter sp. (strain K31), this protein is Exodeoxyribonuclease 7 small subunit.